We begin with the raw amino-acid sequence, 434 residues long: Pectate lyase (434 aa).

The first 22 residues, Met1–Ala22, serve as a signal peptide directing secretion. Asn68 and Asn97 each carry an N-linked (GlcNAc...) asparagine glycan. 3 residues coordinate Ca(2+): Asp232, Asp256, and Asp260. Residue Arg312 is part of the active site.

Belongs to the polysaccharide lyase 1 family. Ca(2+) is required as a cofactor.

The enzyme catalyses Eliminative cleavage of (1-&gt;4)-alpha-D-galacturonan to give oligosaccharides with 4-deoxy-alpha-D-galact-4-enuronosyl groups at their non-reducing ends.. Its pathway is glycan metabolism; pectin degradation; 2-dehydro-3-deoxy-D-gluconate from pectin: step 2/5. This Lilium longiflorum (Trumpet lily) protein is Pectate lyase.